A 53-amino-acid polypeptide reads, in one-letter code: Photosystem II reaction center protein K (53 aa).

The propeptide occupies 1-16 (MFYTNVETLLNTNCFA). The helical transmembrane segment at 28 to 48 (LVDVLPIIPLLFLLLAFVWQA) threads the bilayer.

The protein belongs to the PsbK family. As to quaternary structure, PSII is composed of 1 copy each of membrane proteins PsbA, PsbB, PsbC, PsbD, PsbE, PsbF, PsbH, PsbI, PsbJ, PsbK, PsbL, PsbM, PsbT, PsbY, PsbZ, Psb30/Ycf12, at least 3 peripheral proteins of the oxygen-evolving complex and a large number of cofactors. It forms dimeric complexes.

It is found in the plastid. The protein localises to the chloroplast thylakoid membrane. Its function is as follows. One of the components of the core complex of photosystem II (PSII). PSII is a light-driven water:plastoquinone oxidoreductase that uses light energy to abstract electrons from H(2)O, generating O(2) and a proton gradient subsequently used for ATP formation. It consists of a core antenna complex that captures photons, and an electron transfer chain that converts photonic excitation into a charge separation. The protein is Photosystem II reaction center protein K of Euglena anabaena (Euglenaria anabaena).